We begin with the raw amino-acid sequence, 237 residues long: Insulin-like growth factor-binding protein 6 (237 aa).

Residues 1 to 25 (MTPHRLLPPLLLTLLLAARPGGALA) form the signal peptide. The 80-residue stretch at 26–105 (RCPGCGQGVS…LQGRGRCGRA (80 aa)) folds into the IGFBP N-terminal domain. Intrachain disulfides connect cysteine 27-cysteine 30, cysteine 38-cysteine 42, cysteine 55-cysteine 61, cysteine 69-cysteine 82, and cysteine 76-cysteine 102. Positions 101–158 (RCGRARTPSGENPKESKPQAGTARSQDVNRRDQQRNSGTSTTPSRSNSGGVQDTEMGP) are disordered. A compositionally biased stretch (polar residues) spans 135 to 151 (RNSGTSTTPSRSNSGGV). In terms of domain architecture, Thyroglobulin type-1 spans 156–231 (MGPCRKHLDS…SEGGDGSSLC (76 aa)). 3 cysteine pairs are disulfide-bonded: cysteine 159–cysteine 186, cysteine 197–cysteine 208, and cysteine 210–cysteine 231. The disordered stretch occupies residues 215–237 (GQPLPGSSEGGDGSSLCPTGSSG).

Interacts (via C-terminal domain) with PHB2. O-glycosylated.

Its subcellular location is the secreted. Its function is as follows. IGF-binding proteins prolong the half-life of the IGFs and have been shown to either inhibit or stimulate the growth promoting effects of the IGFs on cell culture. They alter the interaction of IGFs with their cell surface receptors. Activates the MAPK signaling pathway and induces cell migration. The protein is Insulin-like growth factor-binding protein 6 (IGFBP6) of Bos taurus (Bovine).